A 71-amino-acid polypeptide reads, in one-letter code: UPF0352 protein VCM66_1964 (71 aa).

It belongs to the UPF0352 family.

The protein is UPF0352 protein VCM66_1964 of Vibrio cholerae serotype O1 (strain M66-2).